The primary structure comprises 536 residues: Multicopper oxidase terE (536 aa).

Residues methionine 1–serine 21 form a disordered region. 3 consecutive Plastocyanin-like domains span residues methionine 1–lysine 67, glutamate 79–asparagine 238, and threonine 354–methionine 488. Cu cation is bound by residues histidine 2, histidine 4, histidine 48, and histidine 50. Histidine 397 provides a ligand contact to Cu cation.

The protein belongs to the multicopper oxidase family.

Its pathway is secondary metabolite biosynthesis. Multicopper oxidase; part of the gene cluster that mediates the biosynthesis of terrein, a fungal metabolite with ecological, antimicrobial, antiproliferative, and antioxidative activities. The first step in the pathway is performed by the polyketide synthase terA that produces 4-hydroxy-6-methylpyranon (4-HMP), orsellinic acid (OA), and 2,3-dehydro-6-hydroxymellein (2,3-dehydro-6-HM) by condensing acetyl-CoA with two, three, or four malonyl-CoA units, respectively. 4-HMP and OA are not pathway intermediates, but are rather shunt or side products. 2,3-dehydro-6-HM is further converted to 6-hydroxymellein (6-HM) by the 6-hydroxymellein synthase terB. The monooxygenases terC and terD, the multicopper oxidase terE and the Kelch-like protein terF are then involved in the transformation of 6-HM to terrein. Even if they are co-regulated with the other terrein cluster genes, terH and terI seem to be dispensable for terrein production; whereas one or both of the 2 transporters terG and terJ are probably required for efficient secretion of metabolites. The protein is Multicopper oxidase terE of Aspergillus terreus (strain NIH 2624 / FGSC A1156).